We begin with the raw amino-acid sequence, 421 residues long: MAPQMQILSEELIQPSSPTPQTLKTHKLSHLDQVLLTCHIPIILFYPNQLDSNLDRAQRSENLKRSLSTVLTQFYPLAGRININSSVDCNDSGVPFLEARVHSQLSEAIKNVAIDELNQYLPFQPYPGGEESGLKKDIPLAVKISCFECGGTAIGVCISHKIADALSLATFLNSWTATCQEETDIVQPNFDLGSHHFPPMESIPAPEFLPDENIVMKRFVFDKEKLEALKAQLASSATEVKNSSRVQIVIAVIWKQFIDVTRAKFDTKNKLVAAQAVNLRSRMNPPFPQSAMGNIATMAYAVAEEDKDFSDLVGPLKTSLAKIDDEHVKELQKGVTYLDYEAEPQELFSFSSWCRLGFYDLDFGWGKPVSVCTTTVPMKNLVYLMDTRNEDGMEAWISMAEDEMSMLSSDFLSLLDTDFSN.

The segment at Met-1–Gln-21 is disordered. Residues His-160 and Asp-362 each act as proton acceptor in the active site.

This sequence belongs to the plant acyltransferase family. In terms of assembly, monomer. Expressed in leaf epidermis.

It carries out the reaction 15alpha-stemmadenine + acetyl-CoA = O-acetyl-15alpha-stemmadenine + CoA. It participates in alkaloid biosynthesis. Functionally, component of iboga and aspidosperma monoterpenoid indole alkaloids (MIAs, e.g. tabersonine and catharanthine) biosynthesis pathway from 19E-geissoschizine. Acetyltransferase that catalyzes the formation of O-acetylstemmadenine from stemmadenine. This is Stemmadenine O-acetyltransferase from Catharanthus roseus (Madagascar periwinkle).